The chain runs to 302 residues: AT-hook motif nuclear-localized protein 29 (302 aa).

The tract at residues 1 to 95 is disordered; sequence MDGGYDQSGG…KPPVIVTRDS (95 aa). Pro residues predominate over residues 32-44; the sequence is QLHPLPQPQPQPQ. The segment at residues 72 to 84 is a DNA-binding region (a.T hook); the sequence is KRPRGRPPGSKNK. Residues 96 to 241 form the PPC domain; it reads PNVLRSHVLE…DEGGEGGEGG (146 aa). A required for the binding to non-AHL interactors region spans residues 164–169; sequence GRFEIL. Residues 229–279 form a disordered region; that stretch reads PLEDEGGEGGEGGEVGEGGGGEGGPPPATSSSPPSGAGQGQLRGNMSGYDQ. Residues 237 to 251 are compositionally biased toward gly residues; it reads GGEGGEVGEGGGGEG.

Homodimer. Interacts with AHL5, AHL12, AHL25, AHL27, TCP4, TCP13 and EF114. Expressed in the hypocotyl and the vascular tissue of seedling.

It localises to the nucleus. Functionally, transcription factor that specifically binds AT-rich DNA sequences related to the nuclear matrix attachment regions (MARs). Acts redundantly with AHL18, AHL22 and AHL27 in the regulation of flowering and regulation of the hypocotyl elongation. Acts redundantly with AHL27/ESC to modulate hypocotyl growth inhibition in response to light. This Arabidopsis thaliana (Mouse-ear cress) protein is AT-hook motif nuclear-localized protein 29.